Reading from the N-terminus, the 434-residue chain is Adenylosuccinate synthetase (434 aa).

GTP-binding positions include 22 to 28 (GDEGKGK) and 50 to 52 (GHT). D23 functions as the Proton acceptor in the catalytic mechanism. Mg(2+)-binding residues include D23 and G50. IMP contacts are provided by residues 23 to 26 (DEGK), 48 to 51 (NAGH), T139, R153, Q234, T249, and R313. H51 functions as the Proton donor in the catalytic mechanism. 309–315 (ATTGRKR) is a substrate binding site. GTP is bound by residues R315, 341–343 (KLD), and 423–425 (SVG).

The protein belongs to the adenylosuccinate synthetase family. Homodimer. The cofactor is Mg(2+).

The protein resides in the cytoplasm. It carries out the reaction IMP + L-aspartate + GTP = N(6)-(1,2-dicarboxyethyl)-AMP + GDP + phosphate + 2 H(+). Its pathway is purine metabolism; AMP biosynthesis via de novo pathway; AMP from IMP: step 1/2. In terms of biological role, plays an important role in the de novo pathway of purine nucleotide biosynthesis. Catalyzes the first committed step in the biosynthesis of AMP from IMP. This is Adenylosuccinate synthetase from Chlorobium luteolum (strain DSM 273 / BCRC 81028 / 2530) (Pelodictyon luteolum).